A 702-amino-acid chain; its full sequence is Ferrioxamine B receptor (702 aa).

A signal peptide spans 1-30; it reads MPLEMFMFATTRMALLIGGAIGGATFPLFA. In terms of domain architecture, TBDR plug spans 55–168; the sequence is PDIETPQSVS…PGGIVALTSR (114 aa). Residues 173–702 form the TBDR beta-barrel domain; the sequence is DAGGEVKLFA…SIVGSVSWAF (530 aa).

It belongs to the TonB-dependent receptor family.

It localises to the cell outer membrane. Ferrioxamine binding and uptake, in association with the TonB protein. May play a role in intestinal colonization. The chain is Ferrioxamine B receptor (foxA) from Salmonella typhimurium (strain SL1344).